We begin with the raw amino-acid sequence, 432 residues long: MPNVVVVGAQWGDEGKGKIVDLLTQYADVVVRFQGGNNAGHTLVVGGEKTVLHLIPSGILHPGKSCVIGNGVVIDPEVLVLEIDRLKAKGALKDDGQLVVSLDAHVIMPWHKAIDVAREQAMGEGKIGTTGRGIGPTYEDKVARRGLRIRDLLDEARLARKVKERAALAREELARLGAKLELDEPALVKRYAELGRRVSGYATDVSIWLHRALQQGKSLLFEGAQGTMLDVDHGTYPFVTSSNTVAGNAVVGCGLGPTAVDYVLGISKAYSTRVGGGPYPTELKDETGERLRKLGGEYGATTGRPRRTGWLDALALRYAVRVNGLSGIAMTKLDVLTGFDTVKIAVGYRLDGKVLDEMPSDPEVIERCTPVYEELPGWTEKLEHLRTWDDLPPRARAYVKRVEELAGVKVVGCSVGADRGETILVENPFLAR.

GTP is bound by residues 12–18 (GDEGKGK) and 40–42 (GHT). The Proton acceptor role is filled by Asp-13. Mg(2+) contacts are provided by Asp-13 and Gly-40. IMP-binding positions include 13–16 (DEGK), 38–41 (NAGH), Thr-130, Arg-144, Gln-225, Thr-240, and Arg-304. The Proton donor role is filled by His-41. 300–306 (ATTGRPR) is a substrate binding site. GTP contacts are provided by residues Arg-306, 332–334 (KLD), and 414–416 (SVG).

The protein belongs to the adenylosuccinate synthetase family. Homodimer. Mg(2+) serves as cofactor.

It is found in the cytoplasm. It carries out the reaction IMP + L-aspartate + GTP = N(6)-(1,2-dicarboxyethyl)-AMP + GDP + phosphate + 2 H(+). It participates in purine metabolism; AMP biosynthesis via de novo pathway; AMP from IMP: step 1/2. In terms of biological role, plays an important role in the de novo pathway of purine nucleotide biosynthesis. Catalyzes the first committed step in the biosynthesis of AMP from IMP. This is Adenylosuccinate synthetase from Anaeromyxobacter sp. (strain K).